Consider the following 37-residue polypeptide: Large ribosomal subunit protein bL36 (37 aa).

Belongs to the bacterial ribosomal protein bL36 family.

In Francisella tularensis subsp. tularensis (strain FSC 198), this protein is Large ribosomal subunit protein bL36.